Consider the following 340-residue polypeptide: GPALPP motifs-containing protein 1 (340 aa).

The interval 1–304 (MARDLIGPAL…PQERIPFDRD (304 aa)) is disordered. Residue Ala-2 is modified to N-acetylalanine. Residues 7–12 (GPALPP) carry the GPALPP motif 1 motif. At Ser-28 the chain carries Phosphoserine. The GPALPP motif 2 signature appears at 32 to 37 (GPALPP). Over residues 60-69 (GNQESEEDDS) the composition is skewed to acidic residues. Residues 92 to 97 (GPALPP) carry the GPALPP motif 3 motif. Residue Ser-105 is modified to Phosphoserine. The span at 107–116 (PRPIIGPALP) shows a compositional bias: pro residues. The GPALPP motif 4 signature appears at 112–117 (GPALPP). The span at 124–133 (QKSDKGRDDP) shows a compositional bias: basic and acidic residues. Position 138 is a phosphothreonine (Thr-138). Ser-140 and Ser-141 each carry phosphoserine. 4 stretches are compositionally biased toward basic and acidic residues: residues 163 to 187 (EFEK…KPIV), 227 to 261 (PADR…KRLA), 269 to 279 (ESKRSESLMDI), and 287 to 304 (KAAE…FDRD). Residue Lys-271 forms a Glycyl lysine isopeptide (Lys-Gly) (interchain with G-Cter in SUMO2) linkage. Residue Lys-308 forms a Glycyl lysine isopeptide (Lys-Gly) (interchain with G-Cter in SUMO2) linkage.

The protein is GPALPP motifs-containing protein 1 (GPALPP1) of Homo sapiens (Human).